A 346-amino-acid polypeptide reads, in one-letter code: Putative [LysW]-L-2-aminoadipate/[LysW]-L-glutamate phosphate reductase (346 aa).

12 to 15 (SGFT) serves as a coordination point for NADP(+). Cys-147 is a catalytic residue. Residues 178-198 (GSSEGGAGGGDASSHPERSGV) are disordered. An NADP(+)-binding site is contributed by Asn-310.

Belongs to the NAGSA dehydrogenase family. Type 1 subfamily. LysY sub-subfamily.

It localises to the cytoplasm. The catalysed reaction is [amino-group carrier protein]-C-terminal-N-(1-carboxy-5-oxopentan-1-yl)-L-glutamine + phosphate + NADP(+) = [amino-group carrier protein]-C-terminal-N-(1-carboxy-5-phosphooxy-5-oxopentan-1-yl)-L-glutamine + NADPH + H(+). The enzyme catalyses [amino-group carrier protein]-C-terminal-gamma-(L-glutamyl-5-semialdehyde)-L-glutamate + phosphate + NADP(+) = [amino-group carrier protein]-C-terminal-gamma-(5-phospho-L-glutamyl)-L-glutamate + NADPH + H(+). Its pathway is amino-acid biosynthesis; L-lysine biosynthesis via AAA pathway; L-lysine from L-alpha-aminoadipate (Thermus route): step 3/5. The protein operates within amino-acid biosynthesis; L-arginine biosynthesis. In terms of biological role, involved in both the arginine and lysine biosynthetic pathways. The protein is Putative [LysW]-L-2-aminoadipate/[LysW]-L-glutamate phosphate reductase of Haloquadratum walsbyi (strain DSM 16790 / HBSQ001).